Reading from the N-terminus, the 218-residue chain is Adenylate kinase (218 aa).

14 to 19 (GAGKGT) contacts ATP. Positions 34–63 (STGDMFRAAIKAGTELGKQAKALMDEGKLV) are NMP. Residues T35, R40, 61-63 (KLV), 89-92 (GFPR), and Q96 each bind AMP. The LID stretch occupies residues 126–163 (GRRVHQASGRSYHIVYNPPKVEGKDDVTGEDLIIRADD). ATP contacts are provided by residues R127 and 136–137 (SY). AMP is bound by residues R160 and R171. Residue K204 participates in ATP binding.

This sequence belongs to the adenylate kinase family. As to quaternary structure, monomer.

It is found in the cytoplasm. The enzyme catalyses AMP + ATP = 2 ADP. It functions in the pathway purine metabolism; AMP biosynthesis via salvage pathway; AMP from ADP: step 1/1. In terms of biological role, catalyzes the reversible transfer of the terminal phosphate group between ATP and AMP. Plays an important role in cellular energy homeostasis and in adenine nucleotide metabolism. The protein is Adenylate kinase of Mannheimia succiniciproducens (strain KCTC 0769BP / MBEL55E).